Here is an 832-residue protein sequence, read N- to C-terminus: Vacuolar transmembrane transporter penV (832 aa).

The next 2 helical transmembrane spans lie at leucine 39 to isoleucine 59 and phenylalanine 117 to leucine 137. The segment at tryptophan 152 to lysine 171 is disordered. N-linked (GlcNAc...) asparagine glycosylation is present at asparagine 158. A helical membrane pass occupies residues tyrosine 178–leucine 198. Asparagine 214 carries an N-linked (GlcNAc...) asparagine glycan. Positions asparagine 291–valine 322 are disordered. Basic and acidic residues predominate over residues glutamine 302 to histidine 321. Transmembrane regions (helical) follow at residues phenylalanine 434 to leucine 454, glycine 483 to leucine 503, phenylalanine 524 to phenylalanine 544, threonine 560 to leucine 582, leucine 587 to alanine 608, phenylalanine 623 to phenylalanine 645, leucine 650 to tyrosine 672, methionine 687 to leucine 707, and isoleucine 713 to phenylalanine 733. Residues proline 754–serine 777 form a disordered region. Low complexity predominate over residues isoleucine 759 to serine 771.

This sequence belongs to the CSC1 (TC 1.A.17) family.

Its subcellular location is the vacuole membrane. In terms of biological role, vacuolar transmembrane transporter that participates in the first stage of the beta-lactam biosynthesis (the formation of the ACV tripeptide), probably taking part in the supply of amino acids from the vacuolar lumen to the vacuole-anchored ACV synthetase. This is Vacuolar transmembrane transporter penV from Penicillium rubens (strain ATCC 28089 / DSM 1075 / NRRL 1951 / Wisconsin 54-1255) (Penicillium chrysogenum).